Here is a 103-residue protein sequence, read N- to C-terminus: Small ribosomal subunit protein uS10 (103 aa).

Belongs to the universal ribosomal protein uS10 family. Part of the 30S ribosomal subunit.

Functionally, involved in the binding of tRNA to the ribosomes. The protein is Small ribosomal subunit protein uS10 of Dechloromonas aromatica (strain RCB).